The primary structure comprises 220 residues: Putative DNA repair glycosylase MJ1434 (220 aa).

Positions 202, 208, 211, and 217 each coordinate [4Fe-4S] cluster.

It belongs to the Nth/MutY family. Requires [4Fe-4S] cluster as cofactor.

In Methanocaldococcus jannaschii (strain ATCC 43067 / DSM 2661 / JAL-1 / JCM 10045 / NBRC 100440) (Methanococcus jannaschii), this protein is Putative DNA repair glycosylase MJ1434.